The chain runs to 75 residues: Translational regulator CsrA (75 aa).

The protein belongs to the CsrA/RsmA family. In terms of assembly, homodimer; the beta-strands of each monomer intercalate to form a hydrophobic core, while the alpha-helices form wings that extend away from the core.

The protein localises to the cytoplasm. Its function is as follows. A translational regulator that binds mRNA to regulate translation initiation and/or mRNA stability. Usually binds in the 5'-UTR at or near the Shine-Dalgarno sequence preventing ribosome-binding, thus repressing translation. Its main target seems to be the major flagellin gene, while its function is anatagonized by FliW. The polypeptide is Translational regulator CsrA (Treponema denticola (strain ATCC 35405 / DSM 14222 / CIP 103919 / JCM 8153 / KCTC 15104)).